Reading from the N-terminus, the 225-residue chain is Ribonuclease T (225 aa).

Positions 1 to 21 (MSEDHFDDEHEGHGGGGGSRH) are disordered. One can recognise an Exonuclease domain in the interval 33 to 207 (VVVDVETGGF…YDTEKTAELF (175 aa)). Mg(2+) is bound by residues D36, E38, H194, and D199. H194 functions as the Proton donor/acceptor in the catalytic mechanism.

This sequence belongs to the RNase T family. Homodimer. Requires Mg(2+) as cofactor.

Its function is as follows. Trims short 3' overhangs of a variety of RNA species, leaving a one or two nucleotide 3' overhang. Responsible for the end-turnover of tRNA: specifically removes the terminal AMP residue from uncharged tRNA (tRNA-C-C-A). Also appears to be involved in tRNA biosynthesis. The sequence is that of Ribonuclease T from Pseudomonas savastanoi pv. phaseolicola (strain 1448A / Race 6) (Pseudomonas syringae pv. phaseolicola (strain 1448A / Race 6)).